The following is a 213-amino-acid chain: uncharacterized protein (213 aa).

This is an uncharacterized protein from Bacillus subtilis (strain 168).